A 421-amino-acid polypeptide reads, in one-letter code: Tyrosine--tRNA ligase (421 aa).

Y35 is an L-tyrosine binding site. The short motif at 40–49 (PTGPSLHAGH) is the 'HIGH' region element. L-tyrosine is bound by residues Y169 and Q173. A 'KMSKS' region motif is present at residues 229 to 233 (KFGKS). Position 232 (K232) interacts with ATP. In terms of domain architecture, S4 RNA-binding spans 354-420 (RTIVDLLIAS…GKKNFAGVKI (67 aa)).

The protein belongs to the class-I aminoacyl-tRNA synthetase family. TyrS type 1 subfamily. Homodimer.

Its subcellular location is the cytoplasm. The catalysed reaction is tRNA(Tyr) + L-tyrosine + ATP = L-tyrosyl-tRNA(Tyr) + AMP + diphosphate + H(+). Catalyzes the attachment of tyrosine to tRNA(Tyr) in a two-step reaction: tyrosine is first activated by ATP to form Tyr-AMP and then transferred to the acceptor end of tRNA(Tyr). The polypeptide is Tyrosine--tRNA ligase (Corynebacterium efficiens (strain DSM 44549 / YS-314 / AJ 12310 / JCM 11189 / NBRC 100395)).